Reading from the N-terminus, the 390-residue chain is Heparan sulfate glucosamine 3-O-sulfotransferase 3B1 (390 aa).

Residues 1-25 are disordered; that stretch reads MGQRLSGGRSCLDVPGRLLPQPPPP. Over 1 to 32 the chain is Cytoplasmic; the sequence is MGQRLSGGRSCLDVPGRLLPQPPPPPPPVRRK. The chain crosses the membrane as a helical; Signal-anchor for type II membrane protein span at residues 33-53; sequence LALLFAMLCVWLYMFLYSCAG. Residues 54 to 390 lie on the Lumenal side of the membrane; it reads SCAAAPGLLL…QMTGHDFGWD (337 aa). The disordered stretch occupies residues 74-133; it reads PPALATAPDGTPPRLPFRAPPATPLASGKEMAEGAASPEEQSPEVPDSPSPISSFFSGSG. Over residues 83–96 the composition is skewed to pro residues; that stretch reads GTPPRLPFRAPPAT. The segment covering 123-133 has biased composition (low complexity); sequence SPISSFFSGSG. 147–151 contacts 3'-phosphoadenylyl sulfate; that stretch reads KGGTR. Substrate contacts are provided by residues 169-175 and 200-203; these read EPHFFDR and KTPS. Arg-228 and Ser-236 together coordinate 3'-phosphoadenylyl sulfate. A glycan (N-linked (GlcNAc...) asparagine) is linked at Asn-258. 268 to 269 serves as a coordination point for substrate; the sequence is WS. The N-linked (GlcNAc...) asparagine glycan is linked to Asn-329. An intrachain disulfide couples Cys-336 to Cys-348. 353–357 provides a ligand contact to 3'-phosphoadenylyl sulfate; that stretch reads KGRTH.

Belongs to the sulfotransferase 1 family. As to expression, ubiquitous. Most abundant in liver and placenta, followed by heart and kidney.

The protein resides in the golgi apparatus membrane. The catalysed reaction is alpha-D-glucosaminyl-[heparan sulfate](n) + 3'-phosphoadenylyl sulfate = 3-sulfo-alpha-D-glucosaminyl-[heparan sulfate](n) + adenosine 3',5'-bisphosphate + H(+). Its function is as follows. Sulfotransferase that utilizes 3'-phospho-5'-adenylyl sulfate (PAPS) to catalyze the transfer of a sulfo group to an N-unsubstituted glucosamine linked to a 2-O-sulfo iduronic acid unit on heparan sulfate. Catalyzes the O-sulfation of glucosamine in IdoUA2S-GlcNS and also in IdoUA2S-GlcNH2. The substrate-specific O-sulfation generates an enzyme-modified heparan sulfate which acts as a binding receptor to Herpes simplex virus-1 (HSV-1) and permits its entry. Unlike HS3ST1/3-OST-1, does not convert non-anticoagulant heparan sulfate to anticoagulant heparan sulfate. The protein is Heparan sulfate glucosamine 3-O-sulfotransferase 3B1 (HS3ST3B1) of Homo sapiens (Human).